The following is a 1166-amino-acid chain: MGAEFLVGRSGSGKTKLIINSIQDELRRAPFGKPIIFLVPDQMTFLMEYELAKTPDMGGMIRAQVFSFSRLAWRVLQHTGGMSRPFLTSTGVQMLLRKLIEEHKQEFKVYQKASDKSGFTAQVERMLTEFKRYCLEPEDIRRMAESGTASEYRGERVLSEKLHDLSILYQQMEKSLADQYLHSEDYLTLLAEHIPLAEDIKGAHIYVDGFYQFTPQEFRVLEQLMVHAEHITFSLTADKPSYEREPHELELFRMTGKTYYRLHQKAKELNLDITYKELSGTERHTKTPELAHLEAQYEARPAIPYAEKQEALTVMQAANRRAELEGIAREIHALVREKGYRYKDVAILARQPEDYKDMVKEVFADYEIPYFIDGKASMLNHPLIEFIRSSLDVLKGNWRYEAVFRCVKTELLFPLNEPKAKVREQVDQLENYCIAYGIKGDRWTKGDRFQYRRFVSLDDDFAQTDQEIEMENMLNDTRDWIVPPLFQLQKRMKKAKTVQEKAEALYRYLEETDVPLKLDQERQRAEDDGRIIEAQQHQQAWDAVIQLLEEFVEMMGDDEISLDLFQQMIEAGAESLTFSLIPPALDQVFVGNMDLSRMYGTSCTFVLGANDGVLPARPDENGVLSDDDREWLKTIGVELSSGGRERLLDEHFLIYMAFSSPSDRLYVSYPIADAEGKTLLPSMIVKRLEELFPHHKERLLTNEPEQVSDEEQLMYVVNKSVAQSFTASQLRLWTREYDISDVWWSTYNVLMSEQDRLQSKKLFSSLFFRNEVKQLERSVSRQLYGERIQGSVSRMETFNACPFSHFASHGLHLKERQFFKLEAPDIGQLFHSSLKLISDRLREQKLDWRDLTKEQCELFSYDAVERLAPKLQKEILLSSNRHYYVKEKLQKIVTRVSGILSEHAKASGFVPIGLELGFGGKGPLPPLTFQLKNGCTMELVGRIDRVDKAESSKGLLLRIVDYKSSDKGLDLAEVYYGLALQMLTYLDLSITHSADWLGMRATPAGVLYFHIHDPMIQSNLPLGLDEIEQEIFKKFKMKGLLLGDQEVVRLMDTTLQEGRSNIINAGLKKDGSLRSDSAAVGEKEFDLLTKHVRRTFQEAGEQITDGRVSIEPYKMKNKTPCTYCAFKSVCQFDESLEENEYRPLKAEKDKTILEWIKKEADGNEHS.

Residues 1 to 278 (MGAEFLVGRS…LNLDITYKEL (278 aa)) enclose the UvrD-like helicase ATP-binding domain. 7 residues coordinate ATP: S10, G11, K14, T15, K16, T236, and R283. The UvrD-like helicase C-terminal domain occupies 281 to 586 (TERHTKTPEL…TFSLIPPALD (306 aa)). 4 residues coordinate [4Fe-4S] cluster: C801, C1121, C1124, and C1130.

The protein belongs to the helicase family. AddB/RexB type 1 subfamily. In terms of assembly, heterodimer of AddA and AddB. At low magnesium concentrations there is no nuclease activity, but helicase activity is unaffected. is required as a cofactor. The cofactor is Mg(2+). Requires [4Fe-4S] cluster as cofactor.

Its function is as follows. The heterodimer acts both as a highly processive, ATP-dependent DNA helicase and as an ATP-dependent single-stranded exonuclease, acting in both directions. Recognizes the B.subtilis Chi site (5'-AGCGG-3') which transforms the enzyme from a helicase which degrades both DNA strands to one with only 5' to 3' exonuclease activity. This generates a double-stranded DNA with a protruding 3'-terminated single-stranded tail suitable for the initiation of homologous recombination (Chi fragment). The AddB nuclease domain is not required for Chi fragment generation but for recognition of the Chi site; this subunit has 5' -&gt; 3' nuclease activity but no helicase activity. The helicase activity of isolated AddA acts on 3'-tailed substrate and requires AddB to bind to blunt-ended DNA. RecA thread formation during DNA double-strand break repair requires RecJ or AddAB. This chain is ATP-dependent helicase/deoxyribonuclease subunit B, found in Bacillus subtilis (strain 168).